The chain runs to 261 residues: uncharacterized protein (261 aa).

Positions 7–122 (TAVLADDEPL…RLASCCEKLQ (116 aa)) constitute a Response regulatory domain. Residue D54 is modified to 4-aspartylphosphate. The HTH LytTR-type domain occupies 157–261 (LKASKGEEIH…RALQHLFKVS (105 aa)).

This is an uncharacterized protein from Vibrio cholerae serotype O1 (strain ATCC 39315 / El Tor Inaba N16961).